Here is a 110-residue protein sequence, read N- to C-terminus: ATP synthase epsilon chain (110 aa).

It belongs to the ATPase epsilon chain family. F-type ATPases have 2 components, CF(1) - the catalytic core - and CF(0) - the membrane proton channel. CF(1) has five subunits: alpha(3), beta(3), gamma(1), delta(1), epsilon(1). CF(0) has three main subunits: a, b and c.

It localises to the cell inner membrane. Produces ATP from ADP in the presence of a proton gradient across the membrane. This Rickettsia typhi (strain ATCC VR-144 / Wilmington) protein is ATP synthase epsilon chain.